A 1321-amino-acid chain; its full sequence is Bile salt export pump (1321 aa).

At 1–62 (MSDSVILRSV…FSSWTDIWLM (62 aa)) the chain is on the cytoplasmic side. The region spanning 62–385 (MCMGSLCACI…ASPCLEAFAA (324 aa)) is the ABC transmembrane type-1 1 domain. Residues 63–83 (CMGSLCACIHGIAQPGVLLIF) traverse the membrane as a helical segment. Residues 84–147 (GTMTDVFIDY…MIRFAGYYAG (64 aa)) are Extracellular-facing. 4 N-linked (GlcNAc...) asparagine glycosylation sites follow: asparagine 109, asparagine 116, asparagine 122, and asparagine 125. Residues 148 to 168 (IGIAVLTTGYIQICFWGIAAA) traverse the membrane as a helical segment. Topologically, residues 169–215 (HQIQKMRKSYFRKIMRMGIGWVDCNSVGKLNTPFSVDFNKINDSSAD) are cytoplasmic. The chain crosses the membrane as a helical span at residues 216 to 236 (QLAIFIQGMTSPIFGFLVGFS). The Extracellular portion of the chain corresponds to 237–240 (QWWK). The helical transmembrane segment at 241–261 (LTLVIISVSPLIGLGAAIIGL) threads the bilayer. The Cytoplasmic portion of the chain corresponds to 262–319 (SVSKFTDYELKAYAKAGSVADEVISSMRTVAAFGGEKKEVERYEKNLVFAQRWGIRKG). A helical transmembrane segment spans residues 320-340 (IVMGFFTGYMWCLIFFCYALA). The Extracellular portion of the chain corresponds to 341 to 353 (FWYGSKLVLEEGE). A helical transmembrane segment spans residues 354-374 (YSPGALVQIFLSVIIGALNLG). Over 375 to 755 (NASPCLEAFA…KLNAPEWPYM (381 aa)) the chain is Cytoplasmic. Residues 420 to 656 (IEFHNVTFHY…KGVYFALVTL (237 aa)) enclose the ABC transporter 1 domain. Residue 455–462 (GPSGAGKS) participates in ATP binding. Threonine 586 carries the phosphothreonine modification. A Phosphoserine modification is found at serine 587. The tract at residues 651 to 672 (FALVTLQSQRNQGDQEENEKDA) is interaction with HAX1. Residues 659–735 (QRNQGDQEEN…KDKDLPAQED (77 aa)) are disordered. Residues 664–677 (DQEENEKDATEDDI) show a composition bias toward acidic residues. Phosphoserine occurs at positions 690, 701, and 704. Positions 714–731 (VEDHKSTHEEDRKDKDLP) are enriched in basic and acidic residues. Residues 755–1043 (MLLGSMGAAV…ASSYTPSYAK (289 aa)) form the ABC transmembrane type-1 2 domain. A helical membrane pass occupies residues 756–776 (LLGSMGAAVNGAVTPLYAFLF). At 777–794 (SQILGTFSLPDKEEQRSQ) the chain is on the extracellular side. The chain crosses the membrane as a helical span at residues 795–815 (INGICLLFVTLGCVSFFTQFL). Residues 816 to 869 (QGYTFAKSGELLTKRLRKFGFRAMLGQDIGWFDDLRNSPGALTTRLATDASQVQ) are Cytoplasmic-facing. 2 helical membrane passes run 870 to 890 (GATG…TVAM) and 891 to 911 (IIAF…FPFL). The Cytoplasmic portion of the chain corresponds to 912–979 (ALSGALQTKM…PYKMAIKKAN (68 aa)). A helical membrane pass occupies residues 980–1000 (VYGLCFGFSQCITFIANSASY). Topologically, residues 1001–1011 (RYGGYLISNEG) are extracellular. Residues 1012–1032 (LHFSYVFRVISAVVLSATALG) form a helical membrane-spanning segment. At 1033 to 1321 (RASSYTPSYA…KLVTTGSPIS (289 aa)) the chain is on the cytoplasmic side. An ABC transporter 2 domain is found at 1078–1316 (IDFVDCKFTY…KGAYYKLVTT (239 aa)). 1113 to 1120 (GSSGCGKS) contacts ATP. 2 positions are modified to phosphoserine: serine 1214 and serine 1321.

This sequence belongs to the ABC transporter superfamily. ABCB family. Multidrug resistance exporter (TC 3.A.1.201) subfamily. In terms of assembly, interacts with HAX1. Interacts with the adapter protein complex 2 (AP-2) throught AP2A2 or AP2A1; this interaction regulates cell membrane expression of ABCB11 through its internalization in a clathrin-dependent manner and its subsequent degradation. In terms of processing, N-glycosylated. Ubiquitinated; short-chain ubiquitination regulates cell-Surface expression of ABCB11. In terms of tissue distribution, expressed predominantly, if not exclusively in the liver, where it was further localized to the canalicular microvilli and to subcanalicular vesicles of the hepatocytes by in situ.

Its subcellular location is the apical cell membrane. It is found in the recycling endosome membrane. The protein resides in the endosome. The protein localises to the cell membrane. It catalyses the reaction cholate(in) + ATP + H2O = cholate(out) + ADP + phosphate + H(+). It carries out the reaction taurocholate(in) + ATP + H2O = taurocholate(out) + ADP + phosphate + H(+). The catalysed reaction is glycocholate(in) + ATP + H2O = glycocholate(out) + ADP + phosphate + H(+). The enzyme catalyses glycochenodeoxycholate(in) + ATP + H2O = glycochenodeoxycholate(out) + ADP + phosphate + H(+). It catalyses the reaction taurochenodeoxycholate(in) + ATP + H2O = taurochenodeoxycholate(out) + ADP + phosphate + H(+). It carries out the reaction glycoursodeoxycholate(in) + ATP + H2O = glycoursodeoxycholate(out) + ADP + phosphate + H(+). The catalysed reaction is tauroursodeoxycholate(in) + ATP + H2O = tauroursodeoxycholate(out) + ADP + phosphate + H(+). The enzyme catalyses taurodeoxycholate(in) + ATP + H2O = taurodeoxycholate(out) + ADP + phosphate + H(+). It catalyses the reaction taurolithocholate 3-sulfate(in) + ATP + H2O = taurolithocholate 3-sulfate(out) + ADP + phosphate + H(+). It carries out the reaction pravastatin(in) + ATP + H2O = pravastatin(out) + ADP + phosphate + H(+). The uptake of taurocholate is inhibited by taurolithocholate sulfate with an IC(50) of 9 uM. Pravastatin competitively inhibits the transport of taurocholic acid. Cyclosporin A, glibenclamide, rifampicin and troglitazonestrongly competitively inhibit the transport activity of taurocholate. The canalicular transport activity of taurocholate is strongly dependent on canalicular membrane cholesterol content. The uptake of taurocholate is increased by short- and medium-chain fatty acids. Cholesterol increases transport capacity of taurocholate without affecting the affinity for the substrate. Its function is as follows. Catalyzes the transport of the major hydrophobic bile salts, such as taurine and glycine-conjugated cholic acid across the canalicular membrane of hepatocytes in an ATP-dependent manner, therefore participates in hepatic bile acid homeostasis and consequently to lipid homeostasis through regulation of biliary lipid secretion in a bile salts dependent manner. Transports taurine-conjugated bile salts more rapidly than glycine-conjugated bile salts. Also transports non-bile acid compounds, such as pravastatin and fexofenadine in an ATP-dependent manner and may be involved in their biliary excretion. This Oryctolagus cuniculus (Rabbit) protein is Bile salt export pump.